We begin with the raw amino-acid sequence, 546 residues long: 2-isopropylmalate synthase (546 aa).

The Pyruvate carboxyltransferase domain occupies isoleucine 8–serine 271. Mn(2+) is bound by residues aspartate 17, histidine 208, histidine 210, and asparagine 244. Residues glutamine 408–asparagine 546 form a regulatory domain region.

The protein belongs to the alpha-IPM synthase/homocitrate synthase family. LeuA type 1 subfamily. In terms of assembly, homodimer. The cofactor is Mn(2+).

It localises to the cytoplasm. It catalyses the reaction 3-methyl-2-oxobutanoate + acetyl-CoA + H2O = (2S)-2-isopropylmalate + CoA + H(+). The protein operates within amino-acid biosynthesis; L-leucine biosynthesis; L-leucine from 3-methyl-2-oxobutanoate: step 1/4. Catalyzes the condensation of the acetyl group of acetyl-CoA with 3-methyl-2-oxobutanoate (2-ketoisovalerate) to form 3-carboxy-3-hydroxy-4-methylpentanoate (2-isopropylmalate). In Prochlorococcus marinus (strain MIT 9312), this protein is 2-isopropylmalate synthase.